A 102-amino-acid polypeptide reads, in one-letter code: Glutaredoxin-C13 (102 aa).

Positions 1–101 (MDKVMRMSSE…PLIKPYQSIL (101 aa)) constitute a Glutaredoxin domain. The cysteines at positions 21 and 24 are disulfide-linked.

This sequence belongs to the glutaredoxin family. CC-type subfamily.

The protein localises to the cytoplasm. Has a glutathione-disulfide oxidoreductase activity in the presence of NADPH and glutathione reductase. Reduces low molecular weight disulfides and proteins. The polypeptide is Glutaredoxin-C13 (GRXC13) (Arabidopsis thaliana (Mouse-ear cress)).